Here is a 421-residue protein sequence, read N- to C-terminus: Proton extrusion protein PxcA (421 aa).

The segment at 124 to 153 (PTVHSSNPDDSQLMTSKNNSKPVPDPESDD) is disordered. Over residues 125–144 (TVHSSNPDDSQLMTSKNNSK) the composition is skewed to polar residues. The next 4 membrane-spanning stretches (helical) occupy residues 203-223 (FVLL…SFIV), 298-318 (AIKN…LLIS), 345-365 (IIIL…WEVI), and 381-401 (FIFL…KYWI).

It belongs to the CemA family.

The protein resides in the cell inner membrane. Its function is as follows. Required for H(+) efflux immediately after light irradiation to form a rapid H(+) concentration gradient across the thylakoid membranes. Together with PxcL, contributes to transient H(+) uptake following dark to light transition. The protein is Proton extrusion protein PxcA of Synechococcus sp. (strain ATCC 27144 / PCC 6301 / SAUG 1402/1) (Anacystis nidulans).